Consider the following 207-residue polypeptide: MKMIIGRKIGMTRVFVGNDSVPVTVIKAGPCVVVQKKTVEKDGYNAVQLGFEKAKKVNKPLAGHFKKFGVEPMKILREFRVENPDEYEPGQVIKVDVFEKGEYVDVTGWTKGRGFAGAMKRWGFSGGPKSHGSKFHRELGSVGQHTEPAKIWKGKKMPGRYGNERVTVRNLQVVDIDPENDLLVVKGGVPGARGGLVLIRSAKAPKK.

The protein belongs to the universal ribosomal protein uL3 family. As to quaternary structure, part of the 50S ribosomal subunit. Forms a cluster with proteins L14 and L19.

In terms of biological role, one of the primary rRNA binding proteins, it binds directly near the 3'-end of the 23S rRNA, where it nucleates assembly of the 50S subunit. This chain is Large ribosomal subunit protein uL3, found in Thermotoga maritima (strain ATCC 43589 / DSM 3109 / JCM 10099 / NBRC 100826 / MSB8).